A 338-amino-acid polypeptide reads, in one-letter code: 1-aminocyclopropane-1-carboxylate deaminase (338 aa).

Position 51 is an N6-(pyridoxal phosphate)lysine (Lys-51). The Nucleophile role is filled by Ser-78.

The protein belongs to the ACC deaminase/D-cysteine desulfhydrase family. As to quaternary structure, homotrimer. Requires pyridoxal 5'-phosphate as cofactor.

The enzyme catalyses 1-aminocyclopropane-1-carboxylate + H2O = 2-oxobutanoate + NH4(+). Catalyzes a cyclopropane ring-opening reaction, the irreversible conversion of 1-aminocyclopropane-1-carboxylate (ACC) to ammonia and alpha-ketobutyrate. Allows growth on ACC as a nitrogen source. This chain is 1-aminocyclopropane-1-carboxylate deaminase, found in Methylibium petroleiphilum (strain ATCC BAA-1232 / LMG 22953 / PM1).